Here is an 864-residue protein sequence, read N- to C-terminus: N-alpha-acetyltransferase 16, NatA auxiliary subunit (864 aa).

7 TPR repeats span residues 46-79 (GETL…DVRS), 80-113 (HVCW…DKDN), 148-184 (RASW…PPNK), 224-257 (LLVE…NAEN), 374-407 (IWVQ…TPTL), 408-441 (IELF…DTAD), and 485-514 (MWFE…VERH). Residues 594–646 (KMLSKQRRAQKKAKVEEERKHTERERQQKNQKKKREEEEEVTSGHKEELIPEK) are disordered. Basic residues predominate over residues 595–605 (MLSKQRRAQKK). Basic and acidic residues-rich tracts occupy residues 606–621 (AKVE…ERQQ) and 635–646 (TSGHKEELIPEK).

In terms of assembly, component of the N-terminal acetyltransferase A (NatA) complex composed of NAA10 and NAA16. Highest levels in the kidney and testes. Moderate expression in the liver, thymus and skin.

Its function is as follows. Auxillary subunit of the N-terminal acetyltransferase A (NatA) complex which displays alpha (N-terminal) acetyltransferase activity. This Mus musculus (Mouse) protein is N-alpha-acetyltransferase 16, NatA auxiliary subunit (Naa16).